The chain runs to 510 residues: Outer spore wall protein 7 (510 aa).

The N-terminal stretch at 1–23 is a signal peptide; sequence MKAVFKVTTALLACVFIARYLVC. Residues 167-195 form a disordered region; that stretch reads FETDSETEDYEDDENENEDEDEDEDEDDV. The span at 169-195 shows a compositional bias: acidic residues; it reads TDSETEDYEDDENENEDEDEDEDEDDV. Tyr-354 is modified (phosphotyrosine).

Belongs to the OSW/SHE family.

Functionally, involved in spore wall assembly. The protein is Outer spore wall protein 7 of Saccharomyces cerevisiae (strain ATCC 204508 / S288c) (Baker's yeast).